Consider the following 599-residue polypeptide: Dual specificity tyrosine-phosphorylation-regulated kinase 2 (599 aa).

A disordered region spans residues 1-55 (MLTRKPSAAAPAAYPTGRGGDTAVRQLQASPGIGAGAPRSGVGTGPPSPIALPPL). Phosphoserine is present on S30. T104 is modified (phosphothreonine; by ATM). Residues 187-189 (KKR) carry the Nuclear localization signal motif. One can recognise a Protein kinase domain in the interval 220 to 533 (YEVLKVIGKG…PGQALRHPWL (314 aa)). Residues 226 to 234 (IGKGSFGQV), K249, and 299 to 302 (FELL) contribute to the ATP site. The active-site Proton acceptor is the D346. T379 is subject to Phosphothreonine; by MAP3K10. A Phosphotyrosine; by autocatalysis modification is found at Y380. At S440 the chain carries Phosphoserine; by ATM. Position 447 is a phosphoserine; by MAP3K10 (S447).

The protein belongs to the protein kinase superfamily. CMGC Ser/Thr protein kinase family. MNB/DYRK subfamily. As to quaternary structure, component of an E3 ligase complex containing DYRK2, EDD/UBR5, DDB1 and DCAF1 (EDVP complex). Interacts directly with EDD/UBR5, DDB1 and DCAF1. Interacts with SIAH2 and MDM2. Interacts with MAP3K10 and NFATC1. May also interact with CCNL2. Mg(2+) serves as cofactor. Mn(2+) is required as a cofactor. Autophosphorylates cotranslationally on the second tyrosine residue in the Tyr-X-Tyr motif in the activation loop, but once mature, does not have any protein tyrosine kinase activity. Phosphorylated at Thr-104 and Ser-440 by ATM in response to genotoxic stress. In terms of processing, under normal conditions, polyubiquitinated in the nucleus by MDM2, leading to its proteasomal degradation. Phosphorylation on Thr-104 and Ser-440 by ATM in response to genotoxic stress disrupts MDM2 binding and prevents MDM2-mediated ubiquitination and subsequent proteasomal degradation. Polyubiquitinated by SIAH2, leading to its proteasomal degradation. Polyubiquitinated by SIAH2 occurs under normal conditions, and is enhanced in response to hypoxia.

The protein resides in the cytoplasm. It is found in the nucleus. It catalyses the reaction L-seryl-[protein] + ATP = O-phospho-L-seryl-[protein] + ADP + H(+). It carries out the reaction L-threonyl-[protein] + ATP = O-phospho-L-threonyl-[protein] + ADP + H(+). The enzyme catalyses L-tyrosyl-[protein] + ATP = O-phospho-L-tyrosyl-[protein] + ADP + H(+). With respect to regulation, activated by autophosphorylation on the second tyrosine residue in the Tyr-X-Tyr motif in the activation loop. Functionally, serine/threonine-protein kinase involved in the regulation of the mitotic cell cycle, cell proliferation, apoptosis, organization of the cytoskeleton and neurite outgrowth. Functions in part via its role in ubiquitin-dependent proteasomal protein degradation. Functions downstream of ATM and phosphorylates p53/TP53 at 'Ser-46', and thereby contributes to the induction of apoptosis in response to DNA damage. Phosphorylates NFATC1, and thereby inhibits its accumulation in the nucleus and its transcription factor activity. Phosphorylates EIF2B5 at 'Ser-544', enabling its subsequent phosphorylation and inhibition by GSK3B. Likewise, phosphorylation of NFATC1, CRMP2/DPYSL2 and CRMP4/DPYSL3 promotes their subsequent phosphorylation by GSK3B. May play a general role in the priming of GSK3 substrates. Inactivates GYS1 by phosphorylation at 'Ser-641', and potentially also a second phosphorylation site, thus regulating glycogen synthesis. Mediates EDVP E3 ligase complex formation and is required for the phosphorylation and subsequent degradation of KATNA1. Phosphorylates TERT at 'Ser-457', promoting TERT ubiquitination by the EDVP complex. Phosphorylates SIAH2, and thereby increases its ubiquitin ligase activity. Promotes the proteasomal degradation of MYC and JUN, and thereby regulates progress through the mitotic cell cycle and cell proliferation. Promotes proteasomal degradation of GLI2 and GLI3, and thereby plays a role in smoothened and sonic hedgehog signaling. Phosphorylates CRMP2/DPYSL2, CRMP4/DPYSL3, DCX, EIF2B5, EIF4EBP1, GLI2, GLI3, GYS1, JUN, MDM2, MYC, NFATC1, p53/TP53, TAU/MAPT and KATNA1. Can phosphorylate histone H1, histone H3 and histone H2B (in vitro). Can phosphorylate CARHSP1 (in vitro). Plays a role in cytoskeleton organization and neurite outgrowth via its phosphorylation of DCX. This is Dual specificity tyrosine-phosphorylation-regulated kinase 2 from Mus musculus (Mouse).